A 147-amino-acid polypeptide reads, in one-letter code: Large ribosomal subunit protein uL13 (147 aa).

The protein belongs to the universal ribosomal protein uL13 family. In terms of assembly, part of the 50S ribosomal subunit.

This protein is one of the early assembly proteins of the 50S ribosomal subunit, although it is not seen to bind rRNA by itself. It is important during the early stages of 50S assembly. The chain is Large ribosomal subunit protein uL13 from Pseudarthrobacter chlorophenolicus (strain ATCC 700700 / DSM 12829 / CIP 107037 / JCM 12360 / KCTC 9906 / NCIMB 13794 / A6) (Arthrobacter chlorophenolicus).